The primary structure comprises 445 residues: Putative H/ACA ribonucleoprotein complex subunit 4 (445 aa).

Positions Met1–Thr32 are disordered. A compositionally biased stretch (polar residues) spans Gln20 to Thr32. Asp113 acts as the Nucleophile in catalysis. The PUA domain occupies His284 to Met359. The segment at Thr407 to Glu445 is disordered.

Belongs to the pseudouridine synthase TruB family. As to quaternary structure, component of the small nucleolar ribonucleoprotein particle containing H/ACA-type snoRNAs (H/ACA snoRNPs).

It localises to the nucleus. The protein resides in the nucleolus. The catalysed reaction is a uridine in RNA = a pseudouridine in RNA. In terms of biological role, plays a central role in ribosomal RNA processing. Probable catalytic subunit of H/ACA small nucleolar ribonucleoprotein (H/ACA snoRNP) complex, which catalyzes pseudouridylation of rRNA. This involves the isomerization of uridine such that the ribose is subsequently attached to C5, instead of the normal N1. Pseudouridine ('psi') residues may serve to stabilize the conformation of rRNAs. The protein is Putative H/ACA ribonucleoprotein complex subunit 4 of Caenorhabditis briggsae.